The primary structure comprises 292 residues: Cyclic dipurine nucleotide synthase (292 aa).

Gln-47 contributes to the ATP binding site. 48–52 (GSYRN) is a binding site for GTP. Mg(2+) contacts are provided by Asp-61 and Asp-63. ATP contacts are provided by residues Asp-63, 121 to 122 (NK), and Asp-136. Asp-136 lines the Mg(2+) pocket. Residues Lys-197 and Ser-216 each contribute to the GTP site.

Belongs to the CD-NTase family. E01 subfamily. Mg(2+) is required as a cofactor.

The enzyme catalyses 2 ATP = 3',3'-c-di-AMP + 2 diphosphate. It catalyses the reaction 2 GTP = 3',3'-c-di-GMP + 2 diphosphate. The catalysed reaction is GTP + ATP = 3',3'-cGAMP + 2 diphosphate. Functionally, cyclic nucleotide synthase (second messenger synthase) of a CBASS antivirus system. CBASS (cyclic oligonucleotide-based antiphage signaling system) provides immunity against bacteriophage. The CD-NTase protein synthesizes cyclic nucleotides in response to infection; these serve as specific second messenger signals. The signals activate a diverse range of effectors, leading to bacterial cell death and thus abortive phage infection. A type I-A(GA) CBASS system. In terms of biological role, cyclic dinucleotide synthase that catalyzes the synthesis of 3'3'-cyclic GMP-AMP (cGAMP) from GTP and ATP, and of c-di-AMP and c-di-GMP, that are second messengers for cell signal transduction. This Elizabethkingia meningoseptica (Chryseobacterium meningosepticum) protein is Cyclic dipurine nucleotide synthase.